The chain runs to 351 residues: Fruit bromelain (351 aa).

The N-terminal stretch at 1–24 (MASKVQLVFLFLFLCAMWASPSAA) is a signal peptide. The propeptide at 25–121 (SRDEPNDPMM…VVSFDDVNIS (97 aa)) is activation peptide. A glycan (N-linked (GlcNAc...) asparagine) is linked at Asn119. 3 disulfides stabilise this stretch: Cys144/Cys184, Cys178/Cys217, and Cys273/Cys325. The active site involves Cys147. Catalysis depends on residues His279 and Asn300.

The protein belongs to the peptidase C1 family.

It carries out the reaction Hydrolysis of proteins with broad specificity for peptide bonds. Bz-Phe-Val-Arg-|-NHMec is a good synthetic substrate, but there is no action on Z-Arg-Arg-|-NHMec (cf. stem bromelain).. In terms of biological role, cysteine proteinase with a high level of diversity in substrate specificity. In Ananas comosus (Pineapple), this protein is Fruit bromelain.